Reading from the N-terminus, the 465-residue chain is Argininosuccinate lyase (465 aa).

This sequence belongs to the lyase 1 family. Argininosuccinate lyase subfamily.

It is found in the cytoplasm. The catalysed reaction is 2-(N(omega)-L-arginino)succinate = fumarate + L-arginine. The protein operates within amino-acid biosynthesis; L-arginine biosynthesis; L-arginine from L-ornithine and carbamoyl phosphate: step 3/3. The protein is Argininosuccinate lyase of Rhodopseudomonas palustris (strain BisB18).